The primary structure comprises 280 residues: Phospholipase C D (280 aa).

A disordered region spans residues 258–280 (VPDPQIMPTQETTPTRGIPSGPC).

Belongs to the bacterial phospholipase C family.

Its subcellular location is the secreted. It is found in the cell wall. The catalysed reaction is a 1,2-diacyl-sn-glycero-3-phosphocholine + H2O = phosphocholine + a 1,2-diacyl-sn-glycerol + H(+). The enzyme catalyses 1,2-dihexadecanoyl-sn-glycero-3-phosphocholine + H2O = 1,2-dihexadecanoyl-sn-glycerol + phosphocholine + H(+). In terms of biological role, involved in virulence. Induces cytotoxic effects on mouse macrophage cell lines, via direct or indirect enzymatic hydrolysis of cell membrane phospholipids. Hydrolyzes phosphatidylcholine. Does not have hemolytic activity. The sequence is that of Phospholipase C D from Mycobacterium tuberculosis (strain ATCC 25618 / H37Rv).